The sequence spans 391 residues: uncharacterized protein (391 aa).

11 consecutive transmembrane segments (helical) span residues 15 to 35 (LSFC…LPIL), 48 to 68 (FLIG…QIPF), 81 to 101 (IIFG…TNSI), 139 to 159 (IIGV…PIIA), 167 to 187 (IFWI…FLIP), 217 to 237 (FYLG…IIPY), 251 to 271 (IVYF…VFYF), 275 to 295 (FFLK…LLLF), 303 to 323 (ICLT…EIFF), 346 to 366 (TSQF…CTFF), and 369 to 389 (NHIF…SFFC).

This sequence belongs to the major facilitator superfamily.

It is found in the cell membrane. This is an uncharacterized protein from Buchnera aphidicola subsp. Schizaphis graminum (strain Sg).